A 399-amino-acid polypeptide reads, in one-letter code: Tyrosine--tRNA ligase (399 aa).

Positions 42-51 match the 'HIGH' region motif; that stretch reads PTAPDLHLGH. Residues 226–230 carry the 'KMSKS' region motif; it reads KMSKS. K229 is a binding site for ATP. The region spanning 337–398 is the S4 RNA-binding domain; that stretch reads LPVFQVVKQA…GKRKFASVVL (62 aa).

This sequence belongs to the class-I aminoacyl-tRNA synthetase family. TyrS type 2 subfamily. Homodimer.

It is found in the cytoplasm. It carries out the reaction tRNA(Tyr) + L-tyrosine + ATP = L-tyrosyl-tRNA(Tyr) + AMP + diphosphate + H(+). Functionally, catalyzes the attachment of tyrosine to tRNA(Tyr) in a two-step reaction: tyrosine is first activated by ATP to form Tyr-AMP and then transferred to the acceptor end of tRNA(Tyr). The sequence is that of Tyrosine--tRNA ligase from Aromatoleum aromaticum (strain DSM 19018 / LMG 30748 / EbN1) (Azoarcus sp. (strain EbN1)).